Reading from the N-terminus, the 104-residue chain is Conantokin-P (104 aa).

An N-terminal signal peptide occupies residues 1 to 26 (MQLYTYLYLLVPLVTFHLILSTGTLA). A propeptide spanning residues 27-80 (HGGTLTERRSTDTTALKPEPVLLQKSDARSTDDNDKDRLTQMKRILKKRGNKAR) is cleaved from the precursor. A disordered region spans residues 29-87 (GTLTERRSTDTTALKPEPVLLQKSDARSTDDNDKDRLTQMKRILKKRGNKARGEEEHSK). A compositionally biased stretch (basic and acidic residues) spans 52–66 (SDARSTDDNDKDRLT). 4-carboxyglutamate occurs at positions 83, 84, 90, 94, and 103. A divalent metal cation is bound by residues E90 and E94. Cysteines 91 and 104 form a disulfide.

This sequence belongs to the conotoxin B superfamily. As to expression, expressed by the venom duct.

The protein resides in the secreted. In terms of biological role, conantokins inhibit N-methyl-D-aspartate (NMDA) receptors. This toxin has the highest potency for the NR2B/GRIN2B subunit, followed by NR2A/GRIN2A, NR2C/GRIN2C, and NR2D/GRIN2D subunits. In Conus purpurascens (Purple cone), this protein is Conantokin-P.